Reading from the N-terminus, the 509-residue chain is Maturase K (509 aa).

This sequence belongs to the intron maturase 2 family. MatK subfamily.

Its subcellular location is the plastid. The protein resides in the chloroplast. Its function is as follows. Usually encoded in the trnK tRNA gene intron. Probably assists in splicing its own and other chloroplast group II introns. The protein is Maturase K of Metasequoia glyptostroboides (Dawn redwood).